We begin with the raw amino-acid sequence, 450 residues long: Cysteine protease ATG4C (450 aa).

The Nucleophile role is filled by C112. Active-site residues include D336 and H338.

This sequence belongs to the peptidase C54 family.

It localises to the cytoplasm. The catalysed reaction is [protein]-C-terminal L-amino acid-glycyl-phosphatidylethanolamide + H2O = [protein]-C-terminal L-amino acid-glycine + a 1,2-diacyl-sn-glycero-3-phosphoethanolamine. Functionally, cysteine protease that plays a key role in autophagy by mediating both proteolytic activation and delipidation of ATG8 family proteins. The protease activity is required for proteolytic activation of ATG8 family proteins: cleaves the C-terminal amino acid of ATG8 proteins to reveal a C-terminal glycine. Exposure of the glycine at the C-terminus is essential for ATG8 proteins conjugation to phosphatidylethanolamine (PE) and insertion to membranes, which is necessary for autophagy. In addition to the protease activity, also mediates delipidation of ATG8 family proteins. Catalyzes delipidation of PE-conjugated forms of ATG8 proteins during macroautophagy. This Xenopus tropicalis (Western clawed frog) protein is Cysteine protease ATG4C.